Reading from the N-terminus, the 408-residue chain is LL-diaminopimelate aminotransferase (408 aa).

Substrate contacts are provided by tyrosine 15 and glycine 42. Pyridoxal 5'-phosphate-binding positions include tyrosine 72, 108–109 (SK), tyrosine 132, asparagine 187, tyrosine 218, and 246–248 (SFS). Lysine 109, tyrosine 132, and asparagine 187 together coordinate substrate. Lysine 249 bears the N6-(pyridoxal phosphate)lysine mark. Residues arginine 257 and asparagine 292 each contribute to the pyridoxal 5'-phosphate site. Asparagine 292 and arginine 388 together coordinate substrate.

The protein belongs to the class-I pyridoxal-phosphate-dependent aminotransferase family. LL-diaminopimelate aminotransferase subfamily. In terms of assembly, homodimer. Pyridoxal 5'-phosphate is required as a cofactor.

The enzyme catalyses (2S,6S)-2,6-diaminopimelate + 2-oxoglutarate = (S)-2,3,4,5-tetrahydrodipicolinate + L-glutamate + H2O + H(+). Its pathway is amino-acid biosynthesis; L-lysine biosynthesis via DAP pathway; LL-2,6-diaminopimelate from (S)-tetrahydrodipicolinate (aminotransferase route): step 1/1. Functionally, involved in the synthesis of meso-diaminopimelate (m-DAP or DL-DAP), required for both lysine and peptidoglycan biosynthesis. Catalyzes the direct conversion of tetrahydrodipicolinate to LL-diaminopimelate. The polypeptide is LL-diaminopimelate aminotransferase (Synechococcus sp. (strain WH7803)).